The chain runs to 292 residues: Phosphatidylglycerol--prolipoprotein diacylglyceryl transferase (292 aa).

The next 4 membrane-spanning stretches (helical) occupy residues 24-44 (ISVH…LLIA), 65-85 (FFIW…VLIY), 110-130 (GISG…AIIF), and 136-156 (QSFW…YVFG). Arg-157 lines the a 1,2-diacyl-sn-glycero-3-phospho-(1'-sn-glycerol) pocket. 3 consecutive transmembrane segments (helical) span residues 192-212 (SQLF…ICLL), 219-239 (GTLL…CEYF), and 256-276 (GQIL…FVFV).

This sequence belongs to the Lgt family.

The protein resides in the cell inner membrane. The enzyme catalyses L-cysteinyl-[prolipoprotein] + a 1,2-diacyl-sn-glycero-3-phospho-(1'-sn-glycerol) = an S-1,2-diacyl-sn-glyceryl-L-cysteinyl-[prolipoprotein] + sn-glycerol 1-phosphate + H(+). The protein operates within protein modification; lipoprotein biosynthesis (diacylglyceryl transfer). Its function is as follows. Catalyzes the transfer of the diacylglyceryl group from phosphatidylglycerol to the sulfhydryl group of the N-terminal cysteine of a prolipoprotein, the first step in the formation of mature lipoproteins. The chain is Phosphatidylglycerol--prolipoprotein diacylglyceryl transferase from Helicobacter hepaticus (strain ATCC 51449 / 3B1).